Here is a 322-residue protein sequence, read N- to C-terminus: Protein-L-isoaspartate O-methyltransferase (322 aa).

Positions 1–101 (MSGERAKRFP…AKQGDRSAAP (101 aa)) are disordered. The segment covering 14–29 (EDLKREPRKPEGRVAE) has biased composition (basic and acidic residues). Composition is skewed to low complexity over residues 33 to 51 (AGDA…PAAA) and 67 to 91 (AANP…PQGG). Residue Ser-170 is part of the active site.

The protein belongs to the methyltransferase superfamily. L-isoaspartyl/D-aspartyl protein methyltransferase family.

The protein resides in the cytoplasm. The enzyme catalyses [protein]-L-isoaspartate + S-adenosyl-L-methionine = [protein]-L-isoaspartate alpha-methyl ester + S-adenosyl-L-homocysteine. Catalyzes the methyl esterification of L-isoaspartyl residues in peptides and proteins that result from spontaneous decomposition of normal L-aspartyl and L-asparaginyl residues. It plays a role in the repair and/or degradation of damaged proteins. The chain is Protein-L-isoaspartate O-methyltransferase from Burkholderia pseudomallei (strain 668).